Reading from the N-terminus, the 90-residue chain is Phosphoribosyl-ATP pyrophosphatase (90 aa).

This sequence belongs to the PRA-PH family.

The protein resides in the cytoplasm. It carries out the reaction 1-(5-phospho-beta-D-ribosyl)-ATP + H2O = 1-(5-phospho-beta-D-ribosyl)-5'-AMP + diphosphate + H(+). Its pathway is amino-acid biosynthesis; L-histidine biosynthesis; L-histidine from 5-phospho-alpha-D-ribose 1-diphosphate: step 2/9. This Streptomyces griseus subsp. griseus (strain JCM 4626 / CBS 651.72 / NBRC 13350 / KCC S-0626 / ISP 5235) protein is Phosphoribosyl-ATP pyrophosphatase.